A 159-amino-acid chain; its full sequence is Putative ribosomal RNA large subunit methyltransferase H (159 aa).

S-adenosyl-L-methionine is bound by residues Leu-76, Gly-108, and 127–132 (FSKMTF).

It belongs to the RNA methyltransferase RlmH family.

Its subcellular location is the cytoplasm. It catalyses the reaction pseudouridine(1915) in 23S rRNA + S-adenosyl-L-methionine = N(3)-methylpseudouridine(1915) in 23S rRNA + S-adenosyl-L-homocysteine + H(+). Functionally, specifically methylates the pseudouridine at position 1915 (m3Psi1915) in 23S rRNA. The sequence is that of Putative ribosomal RNA large subunit methyltransferase H from Methanococcus vannielii (strain ATCC 35089 / DSM 1224 / JCM 13029 / OCM 148 / SB).